The sequence spans 160 residues: Na(+)/H(+) antiporter subunit E1 (160 aa).

Helical transmembrane passes span 1 to 21 (MAIQILVNLILSVFWLFVTGS), 27 to 47 (FILGYLFALLLVYIMRGVLPG), 49 to 69 (FYLITVYKIIKLFLVFLIELI), and 101 to 121 (WQIVLLSNLITLTPGTIVLGI).

Belongs to the CPA3 antiporters (TC 2.A.63) subunit E family. As to quaternary structure, may form a heterooligomeric complex that consists of seven subunits: mnhA1, mnhB1, mnhC1, mnhD1, mnhE1, mnhF1 and mnhG1.

Its subcellular location is the cell membrane. Functionally, mnh complex is a Na(+)/H(+) antiporter involved in Na(+) excretion. The chain is Na(+)/H(+) antiporter subunit E1 (mnhE1) from Staphylococcus saprophyticus subsp. saprophyticus (strain ATCC 15305 / DSM 20229 / NCIMB 8711 / NCTC 7292 / S-41).